Reading from the N-terminus, the 745-residue chain is Junction plakoglobin (745 aa).

Methionine 1 carries the post-translational modification N-acetylmethionine. O-linked (GlcNAc) threonine glycosylation is present at threonine 14. 2 positions are modified to phosphoserine: serine 99 and serine 125. 12 ARM repeats span residues 132–171 (NYQDDAELATRALPELTKLLNDEDPVVVTKAAMIVNQLSK), 172–215 (KEAS…LSHH), 216–255 (REGLLAIFKSGGIPALVRMLSSPVESVLFYAITTLHNLLL), 258–297 (EGAKMAVRLADGLQKMVPLLNKNNPKFLAITTDCLQLLAY), 298–341 (GNQE…LSVC), 342–381 (PSNKPAIVEAGGMQALGKHLTSNSPRLVQNCLWTLRNLSD), 383–420 (ATKQEGLESVLKILVNQLSVDDVNVLTCATGTLSNLTC), 423–464 (SKNK…HLTS), 470–510 (EMAQ…NLAL), 512–551 (PANHAPLQEAAVIPRLVQLLVKAHQDAQRHVAAGTQQPYT), 574–613 (PMNRMEIFRLNTIPLFVQLLYSSVENIQRVAAGVLCELAQ), and 615–661 (KEAA…PDYR). An interaction with DSC1 and DSG1 region spans residues 132–297 (NYQDDAELAT…TTDCLQLLAY (166 aa)). Serine 182 carries the phosphoserine modification. Residues 574 to 661 (PMNRMEIFRL…ISEDKNPDYR (88 aa)) form an interaction with DSC1 region. 2 positions are modified to phosphoserine: serine 665 and serine 730.

The protein belongs to the beta-catenin family. As to quaternary structure, homodimer. Component of an E-cadherin/catenin adhesion complex composed of at least E-cadherin/CDH1 and gamma-catenin/JUP, and possibly alpha-catenin/CTNNA1; the complex is located to adherens junctions. The stable association of CTNNA1 is controversial as CTNNA1 was shown not to bind to F-actin when assembled in the complex. Interacts with MUC1. Interacts with CAV1. Interacts with PTPRJ. Interacts with DSG1. Interacts with DSC1 and DSC2. Interacts with PKP2. Interacts with PKP3 (via N-terminus); the interaction is required for PKP3 localization to desmosome cell-cell junctions. Interacts with DSG4. May be phosphorylated by FER. In terms of tissue distribution, expressed in the mammary epithelium (at protein level).

The protein localises to the cell junction. Its subcellular location is the adherens junction. It localises to the desmosome. The protein resides in the cytoplasm. It is found in the cytoskeleton. The protein localises to the cell membrane. Its subcellular location is the nucleus. Common junctional plaque protein. The membrane-associated plaques are architectural elements in an important strategic position to influence the arrangement and function of both the cytoskeleton and the cells within the tissue. The presence of plakoglobin in both the desmosomes and in the intermediate junctions suggests that it plays a central role in the structure and function of submembranous plaques. Acts as a substrate for VE-PTP and is required by it to stimulate VE-cadherin function in endothelial cells. Can replace beta-catenin in E-cadherin/catenin adhesion complexes which are proposed to couple cadherins to the actin cytoskeleton. In Mus musculus (Mouse), this protein is Junction plakoglobin.